The primary structure comprises 421 residues: Serine--tRNA ligase (421 aa).

L-serine is bound at residue 229 to 231; that stretch reads TSE. Residues 260–262 and Val276 each bind ATP; that span reads RKE. Residue Glu283 participates in L-serine binding. 347–350 is an ATP binding site; the sequence is EIVS. Thr383 serves as a coordination point for L-serine.

It belongs to the class-II aminoacyl-tRNA synthetase family. Type-1 seryl-tRNA synthetase subfamily. As to quaternary structure, homodimer. The tRNA molecule binds across the dimer.

It localises to the cytoplasm. The catalysed reaction is tRNA(Ser) + L-serine + ATP = L-seryl-tRNA(Ser) + AMP + diphosphate + H(+). It catalyses the reaction tRNA(Sec) + L-serine + ATP = L-seryl-tRNA(Sec) + AMP + diphosphate + H(+). Its pathway is aminoacyl-tRNA biosynthesis; selenocysteinyl-tRNA(Sec) biosynthesis; L-seryl-tRNA(Sec) from L-serine and tRNA(Sec): step 1/1. Functionally, catalyzes the attachment of serine to tRNA(Ser). Is also able to aminoacylate tRNA(Sec) with serine, to form the misacylated tRNA L-seryl-tRNA(Sec), which will be further converted into selenocysteinyl-tRNA(Sec). This chain is Serine--tRNA ligase, found in Nitrosopumilus maritimus (strain SCM1).